The primary structure comprises 157 residues: uncharacterized protein (157 aa).

The N-terminal stretch at 1-26 (MEALRRAHEVALRLLLCRPWASRAAA) is a signal peptide.

The protein localises to the secreted. This is an uncharacterized protein from Homo sapiens (Human).